A 129-amino-acid chain; its full sequence is Histone H2A-III (129 aa).

This sequence belongs to the histone H2A family. The nucleosome is a histone octamer containing two molecules each of H2A, H2B, H3 and H4 assembled in one H3-H4 heterotetramer and two H2A-H2B heterodimers. The octamer wraps approximately 147 bp of DNA.

It localises to the nucleus. Its subcellular location is the chromosome. Core component of nucleosome. Nucleosomes wrap and compact DNA into chromatin, limiting DNA accessibility to the cellular machineries which require DNA as a template. Histones thereby play a central role in transcription regulation, DNA repair, DNA replication and chromosomal stability. DNA accessibility is regulated via a complex set of post-translational modifications of histones, also called histone code, and nucleosome remodeling. The polypeptide is Histone H2A-III (Volvox carteri (Green alga)).